The following is a 37-amino-acid chain: Potassium channel toxin alpha-KTx 1.4 (37 aa).

Intrachain disulfides connect cysteine 7-cysteine 28, cysteine 13-cysteine 33, and cysteine 17-cysteine 35.

This sequence belongs to the short scorpion toxin superfamily. Potassium channel inhibitor family. Alpha-KTx 01 subfamily. In terms of tissue distribution, expressed by the venom gland.

The protein resides in the secreted. Functionally, blocks selectively the high conductance calcium-activated (maxi-K) potassium channels. This chain is Potassium channel toxin alpha-KTx 1.4, found in Centruroides limbatus (Bark scorpion).